A 194-amino-acid chain; its full sequence is MADQQQNPQESELLLTSAGYVSTFPAPGLRRTVRHITGHNAEGKGVFIQTDCGDHHRIIGNEQALANIIYSTKETPVEMNGDVDLKYAKENEPPLHIHNGSVCRMIDFAPNVISPMHRAVSLDYGIVIEGEFKLILDSGESRIMRQGDVSVQRASAHQWHNITGNGTLPGRMMWVLLDCKPIVINDIDFMECSQ.

Positions 106-175 (IDFAPNVISP…GTLPGRMMWV (70 aa)) constitute a Cupin type-2 domain.

This sequence belongs to the virC family.

It functions in the pathway secondary metabolite biosynthesis. Its function is as follows. Cupin-domain-containing oxidoreductase; part of the gene cluster that mediates the biosynthesis of virensols and trichoxide, fungal natural products that contain or are derived from a salicylaldehyde core. The pathway begins with the synthesis of the reduced chain in virensol C by the highly reducing polyketide synthase virA via condensation of one acetate and 8 malonate units. VirA has interesting programming rules since the first 2 ketides are fully reduced, the 3 following ketides undergo beta-dehydration, and the last 3 ketides are only reduced to beta-hydroxys to yield the trihydroxy portion. The production of aldehyde virensol C by virA alone is surprising, since virA does not contain a reductase (R) domain that is typically associated with reductive product release in HRPKS. The cupin-domain enzyme virC is involved in enhancing virA product turnover. The short-chain dehydrogenase virB then oxidizes the C-7 alcohol of virensol C to a ketone, yielding virensol D. Virensol D is further transformed to salicylaldehyde 5-deoxyaurocitrin by the short-chain dehydrogenase virD. VirD catalyzes the dehydrogenation of C-3 to form the beta-ketone aldehyde, which is followed by the generation of the nucleophilic C-2 that is required for the intramolecular aldol condensation between C-2 and C-7, itself followed by dehydration and aromatization which leads to salicylaldehyde 5-deoxyaurocitrin. While the dehydrogenation of virensol D is definitely catalyzed by virD, the aldol condensation and dehydration may be uncatalyzed or assisted by virD. The short chain dehydrogenase virG then converts salicylaldehyde 5-deoxyaurocitrin into virensol B which is further hydroxylated by the cytochrome P450 monooxygenase virE to yield the hydroquinone virensol A. VirI then may oxidize virensol A to form the quinone, while virH performs the epoxidation. Finally, the two remaining short-chain dehydrogenases, virK and virL, are probably responsible for reducing the ketones to the corresponding alcohols to furnish the epoxycyclohexanol structure in trichoxide. The protein is Cupin-domain-containing oxidoreductase virC of Hypocrea virens (strain Gv29-8 / FGSC 10586) (Gliocladium virens).